Here is a 340-residue protein sequence, read N- to C-terminus: DNA primase large subunit PriL (340 aa).

[4Fe-4S] cluster contacts are provided by C229, C301, C310, and C318.

This sequence belongs to the eukaryotic-type primase large subunit family. Heterodimer of a small subunit (PriS) and a large subunit (PriL). [4Fe-4S] cluster is required as a cofactor.

Its function is as follows. Regulatory subunit of DNA primase, an RNA polymerase that catalyzes the synthesis of short RNA molecules used as primers for DNA polymerase during DNA replication. Stabilizes and modulates the activity of the small subunit, increasing the rate of DNA synthesis, and conferring RNA synthesis capability. The DNA polymerase activity may enable DNA primase to also catalyze primer extension after primer synthesis. May also play a role in DNA repair. This is DNA primase large subunit PriL from Thermoplasma acidophilum (strain ATCC 25905 / DSM 1728 / JCM 9062 / NBRC 15155 / AMRC-C165).